We begin with the raw amino-acid sequence, 512 residues long: Cytochrome P450 monooxygenase TwmD (512 aa).

C454 lines the heme pocket.

This sequence belongs to the cytochrome P450 family. Heme serves as cofactor.

Its pathway is secondary metabolite biosynthesis. In terms of biological role, cytochrome P450 monooxygenase; part of the gene cluster that mediates the biosynthesis of wortmanamides A and B, reduced long-chain polyketides amidated with a specific omega-amino acid, 5-aminopentanoic acid (5PA). The PKS modules of TwmB are involved in the synthesis of the polyketide backbone, whereas the non-canonical C domain of TwmB is a bonafide condensation domain that specifically selects 5PA and catalyzes amidation to release polyketide chain. The C domain clearly prefers C16 and C18 fatty acyl substrates, which is consistent with simultaneous formation of both octaketide and nonaketide acyl amides wortmanamides A and B. Because TwmB lacks a designated enoylreductase (ER) domain, the required activity is provided the enoyl reductase TwmE. The roles of the remaining enzymes have still to be clarified. The chain is Cytochrome P450 monooxygenase TwmD from Talaromyces wortmannii (Penicillium wortmannii).